The sequence spans 746 residues: NAD(P)H-quinone oxidoreductase subunit 5, chloroplastic (746 aa).

A run of 16 helical transmembrane segments spans residues 9-29 (YIIL…LLFV), 40-60 (WAFV…NLAI), 88-108 (LIDP…IMVL), 125-145 (FAYM…SNLI), 147-167 (IHIF…FWFT), 185-205 (GDFG…SLEF), 225-245 (FAIL…AQFP), 258-278 (TPIS…FLVA), 283-303 (LFIV…ITLL), 327-347 (LGYI…FHLI), 354-374 (ALLF…VGYS), 396-416 (TTFL…CFWS), 425-445 (WLYS…TAFY), 554-574 (LFPL…GIPF), 610-630 (IFSV…YGSV), and 726-746 (YLFL…YFDF).

It belongs to the complex I subunit 5 family. In terms of assembly, NDH is composed of at least 16 different subunits, 5 of which are encoded in the nucleus.

Its subcellular location is the plastid. The protein resides in the chloroplast thylakoid membrane. It catalyses the reaction a plastoquinone + NADH + (n+1) H(+)(in) = a plastoquinol + NAD(+) + n H(+)(out). The catalysed reaction is a plastoquinone + NADPH + (n+1) H(+)(in) = a plastoquinol + NADP(+) + n H(+)(out). In terms of biological role, NDH shuttles electrons from NAD(P)H:plastoquinone, via FMN and iron-sulfur (Fe-S) centers, to quinones in the photosynthetic chain and possibly in a chloroplast respiratory chain. The immediate electron acceptor for the enzyme in this species is believed to be plastoquinone. Couples the redox reaction to proton translocation, and thus conserves the redox energy in a proton gradient. This is NAD(P)H-quinone oxidoreductase subunit 5, chloroplastic (ndhF) from Dioscorea elephantipes (Elephant's foot yam).